Reading from the N-terminus, the 389-residue chain is Mitochondrial tRNA-specific 2-thiouridylase 1 (389 aa).

Residues 8 to 15 and Met-34 each bind ATP; that span reads GVSGGVDS. Positions 94-96 are interaction with target base in tRNA; it reads NPD. Residue Cys-99 is the Nucleophile of the active site. An intrachain disulfide couples Cys-99 to Cys-205. An ATP-binding site is contributed by Gly-124. Residues 154 to 156 form an interaction with tRNA region; sequence KDQ. The active-site Cysteine persulfide intermediate is the Cys-205. The tract at residues 317–318 is interaction with tRNA; the sequence is QH.

The protein belongs to the MnmA/TRMU family.

The protein localises to the mitochondrion. It carries out the reaction 5-taurinomethyluridine(34) in tRNA + S-sulfanyl-L-cysteinyl-[protein] + AH2 + ATP = 5-taurinomethyl-2-thiouridine(34) in tRNA + L-cysteinyl-[protein] + A + AMP + diphosphate + H(+). Functionally, catalyzes the 2-thiolation of uridine at the wobble position (U34) of mitochondrial tRNA(Lys), tRNA(Glu) and tRNA(Gln). Required for the formation of 5-taurinomethyl-2-thiouridine (tm5s2U) of mitochondrial tRNA(Lys), tRNA(Glu), and tRNA(Gln) at the wobble position. ATP is required to activate the C2 atom of the wobble base. The polypeptide is Mitochondrial tRNA-specific 2-thiouridylase 1 (Drosophila melanogaster (Fruit fly)).